Reading from the N-terminus, the 255-residue chain is CDP-diacylglycerol pyrophosphatase (255 aa).

A helical membrane pass occupies residues 5 to 27; the sequence is LLITVALIAVLALTTLVAWRYLF.

This sequence belongs to the Cdh family.

It is found in the cell inner membrane. The catalysed reaction is a CDP-1,2-diacyl-sn-glycerol + H2O = a 1,2-diacyl-sn-glycero-3-phosphate + CMP + 2 H(+). It functions in the pathway phospholipid metabolism; CDP-diacylglycerol degradation; phosphatidate from CDP-diacylglycerol: step 1/1. The sequence is that of CDP-diacylglycerol pyrophosphatase from Cronobacter sakazakii (strain ATCC BAA-894) (Enterobacter sakazakii).